A 64-amino-acid polypeptide reads, in one-letter code: KKDGYPVEGDNCAFACFGYDNAYCDKLCKDKKADDGYCVWSPDCYCYGLPEHILKEPTKTSGRC.

In terms of domain architecture, LCN-type CS-alpha/beta spans 2 to 64 (KDGYPVEGDN…KEPTKTSGRC (63 aa)). 4 disulfide bridges follow: C12–C64, C16–C38, C24–C44, and C28–C46.

Belongs to the long (4 C-C) scorpion toxin superfamily. Sodium channel inhibitor family. Alpha subfamily. As to expression, expressed by the venom gland.

It is found in the secreted. Alpha toxins bind voltage-independently at site-3 of sodium channels (Nav) and inhibit the inactivation of the activated channels, thereby blocking neuronal transmission. By extending the depolarized period it indirectly affects beta-cell voltage-dependent potassium channels, thus increasing potassium permeability. This is Alpha-toxin Ts5 from Tityus serrulatus (Brazilian scorpion).